The chain runs to 207 residues: Dephospho-CoA kinase (207 aa).

Residues 10–207 (ILGLTGGIGS…FYLTLRGGQS (198 aa)) enclose the DPCK domain. 18–23 (GSGKSA) serves as a coordination point for ATP.

It belongs to the CoaE family.

It is found in the cytoplasm. The catalysed reaction is 3'-dephospho-CoA + ATP = ADP + CoA + H(+). The protein operates within cofactor biosynthesis; coenzyme A biosynthesis; CoA from (R)-pantothenate: step 5/5. Catalyzes the phosphorylation of the 3'-hydroxyl group of dephosphocoenzyme A to form coenzyme A. This is Dephospho-CoA kinase from Pseudomonas syringae pv. tomato (strain ATCC BAA-871 / DC3000).